The following is a 219-amino-acid chain: Protein GrpE (219 aa).

2 disordered regions span residues 1 to 32 (MSTT…LDAT) and 59 to 87 (FDGV…AERT).

Belongs to the GrpE family. In terms of assembly, homodimer.

It is found in the cytoplasm. Its function is as follows. Participates actively in the response to hyperosmotic and heat shock by preventing the aggregation of stress-denatured proteins, in association with DnaK and GrpE. It is the nucleotide exchange factor for DnaK and may function as a thermosensor. Unfolded proteins bind initially to DnaJ; upon interaction with the DnaJ-bound protein, DnaK hydrolyzes its bound ATP, resulting in the formation of a stable complex. GrpE releases ADP from DnaK; ATP binding to DnaK triggers the release of the substrate protein, thus completing the reaction cycle. Several rounds of ATP-dependent interactions between DnaJ, DnaK and GrpE are required for fully efficient folding. In Corynebacterium diphtheriae (strain ATCC 700971 / NCTC 13129 / Biotype gravis), this protein is Protein GrpE.